The sequence spans 636 residues: Fructose-1,6-bisphosphatase class 3 (636 aa).

Belongs to the FBPase class 3 family. Mn(2+) serves as cofactor.

It carries out the reaction beta-D-fructose 1,6-bisphosphate + H2O = beta-D-fructose 6-phosphate + phosphate. Its pathway is carbohydrate biosynthesis; gluconeogenesis. The polypeptide is Fructose-1,6-bisphosphatase class 3 (Streptococcus gordonii (strain Challis / ATCC 35105 / BCRC 15272 / CH1 / DL1 / V288)).